The sequence spans 430 residues: Enolase (430 aa).

Glutamine 167 contacts (2R)-2-phosphoglycerate. The Proton donor role is filled by glutamate 209. Mg(2+) contacts are provided by aspartate 246, glutamate 289, and aspartate 316. Residues lysine 341, arginine 370, serine 371, and lysine 392 each contribute to the (2R)-2-phosphoglycerate site. Lysine 341 (proton acceptor) is an active-site residue.

Belongs to the enolase family. Component of the RNA degradosome, a multiprotein complex involved in RNA processing and mRNA degradation. Requires Mg(2+) as cofactor.

The protein localises to the cytoplasm. Its subcellular location is the secreted. It is found in the cell surface. The catalysed reaction is (2R)-2-phosphoglycerate = phosphoenolpyruvate + H2O. It functions in the pathway carbohydrate degradation; glycolysis; pyruvate from D-glyceraldehyde 3-phosphate: step 4/5. Catalyzes the reversible conversion of 2-phosphoglycerate (2-PG) into phosphoenolpyruvate (PEP). It is essential for the degradation of carbohydrates via glycolysis. The polypeptide is Enolase (Alcanivorax borkumensis (strain ATCC 700651 / DSM 11573 / NCIMB 13689 / SK2)).